The primary structure comprises 198 residues: MGSQSSKAPRGDVTAEEAAGASPAKVNGQENGHVKSNGDLSPKGEGESPPVNGTEEAAGATGDAIEPAPPSQGAEAKGEVPPKETPKKKKKFSFKKPFKLSGLSFKRNRKEGGGDSSASSPTEEEQEQGEISACGEEGTAQEGKAAATPESQEPQAKGAEASAAAKGGDTEEAGPQAAEPSTPSGPESDPAPASEQNE.

The interval 1–198 (MGSQSSKAPR…DPAPASEQNE (198 aa)) is disordered. Residue Gly2 is the site of N-myristoyl glycine attachment. Thr14 is subject to Phosphothreonine. 4 positions are modified to phosphoserine: Ser22, Ser36, Ser41, and Ser48. Residues 53 to 62 (GTEEAAGATG) show a composition bias toward low complexity. Position 71 is a phosphoserine (Ser71). Basic and acidic residues predominate over residues 76-85 (AKGEVPPKET). Residue Thr85 is modified to Phosphothreonine. The span at 86–98 (PKKKKKFSFKKPF) shows a compositional bias: basic residues. An effector domain involved in lipid-binding and calmodulin-binding region spans residues 87–110 (KKKKKFSFKKPFKLSGLSFKRNRK). Residues Ser93, Ser101, and Ser104 each carry the phosphoserine; by PKC modification. Ser119 is modified (phosphoserine). Ser120 is subject to Phosphoserine; by MAPK8. Ser132 carries the post-translational modification Phosphoserine. Phosphothreonine; by MAPK8 is present on Thr148. Phosphoserine occurs at positions 151 and 162. A compositionally biased stretch (low complexity) spans 156–167 (AKGAEASAAAKG). Residue Thr170 is modified to Phosphothreonine. Position 182 is a phosphothreonine; by MAPK8 (Thr182).

It belongs to the MARCKS family. Binds to filamentous actin (F-actin), but not to monomeric G-actin, independently of its phosphorylation status. Interacts with calmodulin. In terms of processing, phosphorylated. Phosphorylation at Ser-120 and Thr-182 is non-redundantly catalyzed by MAPK8 in vivo. Phosphorylation at Thr-148 is preferentially catalyzed by MAPK8 in vivo, but this modification can also be catalyzed by other kinases in the absence of MAPK8. May be phosphorylated by protein kinase C, which disrupts the interaction with calmodulin.

Its subcellular location is the cytoplasm. It is found in the cytoskeleton. The protein resides in the cell membrane. Functionally, controls cell movement by regulating actin cytoskeleton homeostasis and filopodium and lamellipodium formation. When unphosphorylated, induces cell migration. When phosphorylated by MAPK8, induces actin bundles formation and stabilization, thereby reducing actin plasticity, hence restricting cell movement, including neuronal migration. May be involved in coupling the protein kinase C and calmodulin signal transduction systems. This is MARCKS-related protein (MARCKSL1) from Bos taurus (Bovine).